The primary structure comprises 269 residues: Adenosylcobinamide-GDP ribazoletransferase (269 aa).

6 helical membrane-spanning segments follow: residues 63-83, 87-107, 137-157, 158-178, 202-222, and 246-266; these read SAYYPLAGYAVGGLVAGLLYL, LPPGVVAALGVGLWLGLTGML, VGAFGLATGVLALLLLWSLLG, AGLPWYAPLVAAVVARMVVLM, LAFLFALPALLLPHAWLAALV, and VYGLLIVVAELLVLGFYGWGF.

It belongs to the CobS family. The cofactor is Mg(2+).

Its subcellular location is the cell membrane. The catalysed reaction is alpha-ribazole + adenosylcob(III)inamide-GDP = adenosylcob(III)alamin + GMP + H(+). It catalyses the reaction alpha-ribazole 5'-phosphate + adenosylcob(III)inamide-GDP = adenosylcob(III)alamin 5'-phosphate + GMP + H(+). It functions in the pathway cofactor biosynthesis; adenosylcobalamin biosynthesis; adenosylcobalamin from cob(II)yrinate a,c-diamide: step 7/7. Its function is as follows. Joins adenosylcobinamide-GDP and alpha-ribazole to generate adenosylcobalamin (Ado-cobalamin). Also synthesizes adenosylcobalamin 5'-phosphate from adenosylcobinamide-GDP and alpha-ribazole 5'-phosphate. The chain is Adenosylcobinamide-GDP ribazoletransferase from Deinococcus radiodurans (strain ATCC 13939 / DSM 20539 / JCM 16871 / CCUG 27074 / LMG 4051 / NBRC 15346 / NCIMB 9279 / VKM B-1422 / R1).